Consider the following 729-residue polypeptide: DNA topoisomerase 3 (729 aa).

In terms of domain architecture, Toprim spans Lys-3–Thr-136. Residues Glu-9 and Asp-105 each contribute to the Mg(2+) site. A Topo IA-type catalytic domain is found at Tyr-153–Val-594. The segment at Asn-187–Gln-192 is interaction with DNA. Tyr-310 functions as the O-(5'-phospho-DNA)-tyrosine intermediate in the catalytic mechanism. The span at Glu-686–Glu-713 shows a compositional bias: basic and acidic residues. The tract at residues Glu-686–Pro-718 is disordered.

Belongs to the type IA topoisomerase family. Mg(2+) serves as cofactor.

The catalysed reaction is ATP-independent breakage of single-stranded DNA, followed by passage and rejoining.. Releases the supercoiling and torsional tension of DNA, which is introduced during the DNA replication and transcription, by transiently cleaving and rejoining one strand of the DNA duplex. Introduces a single-strand break via transesterification at a target site in duplex DNA. The scissile phosphodiester is attacked by the catalytic tyrosine of the enzyme, resulting in the formation of a DNA-(5'-phosphotyrosyl)-enzyme intermediate and the expulsion of a 3'-OH DNA strand. The free DNA strand then undergoes passage around the unbroken strand, thus removing DNA supercoils. Finally, in the religation step, the DNA 3'-OH attacks the covalent intermediate to expel the active-site tyrosine and restore the DNA phosphodiester backbone. The chain is DNA topoisomerase 3 from Bacillus cereus (strain ZK / E33L).